The chain runs to 830 residues: DNA gyrase subunit A (830 aa).

The Topo IIA-type catalytic domain occupies 33 to 497; it reads LPDVRDGLKP…AENDIDIEDL (465 aa). The active-site O-(5'-phospho-DNA)-tyrosine intermediate is Tyr-121. The GyrA-box signature appears at 524 to 530; sequence QKRGGRG. The interval 805–830 is disordered; that stretch reads KDDSEQLEDSEEVSEVHDAEENNSEE.

It belongs to the type II topoisomerase GyrA/ParC subunit family. In terms of assembly, heterotetramer, composed of two GyrA and two GyrB chains. In the heterotetramer, GyrA contains the active site tyrosine that forms a transient covalent intermediate with DNA, while GyrB binds cofactors and catalyzes ATP hydrolysis.

The protein localises to the cytoplasm. It catalyses the reaction ATP-dependent breakage, passage and rejoining of double-stranded DNA.. In terms of biological role, a type II topoisomerase that negatively supercoils closed circular double-stranded (ds) DNA in an ATP-dependent manner to modulate DNA topology and maintain chromosomes in an underwound state. Negative supercoiling favors strand separation, and DNA replication, transcription, recombination and repair, all of which involve strand separation. Also able to catalyze the interconversion of other topological isomers of dsDNA rings, including catenanes and knotted rings. Type II topoisomerases break and join 2 DNA strands simultaneously in an ATP-dependent manner. The chain is DNA gyrase subunit A from Clostridium acetobutylicum (strain ATCC 824 / DSM 792 / JCM 1419 / IAM 19013 / LMG 5710 / NBRC 13948 / NRRL B-527 / VKM B-1787 / 2291 / W).